The chain runs to 36 residues: Insecticidal toxin LaIT1 (36 aa).

2 cysteine pairs are disulfide-bonded: Cys-11–Cys-23 and Cys-17–Cys-29.

In terms of tissue distribution, expressed by the venom gland.

The protein localises to the secreted. In terms of biological role, affects the activity of both ryanodine-sensitive calcium-release channels RyR1 and RyR2 with high potency. At lower concentrations the toxin increases full openings of the RyRs, and at higher concentrations it inhibits full openings and induce openings to subconductance levels and reduces the number of full conductance openings. The different actions may be attributed to the toxins binding at different sites on the RyRs, with binding at a high-affinity site mediating the increase in full openings and the induction of subconductance states evoked upon binding to a lower-affinity site. Shows insect lethality against crickets and common cutworms (only shows paralysis against cockroaches), but no toxicity is observed in mice. This is Insecticidal toxin LaIT1 from Liocheles australasiae (Dwarf wood scorpion).